The following is a 329-amino-acid chain: Calponin-3 (329 aa).

An N6-acetyllysine modification is found at Lys-23. The Calponin-homology (CH) domain maps to 26-130; sequence HQAEEDLRNW…TLVALAGLAK (105 aa). The residue at position 158 (Lys-158) is an N6-methyllysine. 3 Calponin-like repeats span residues 164-189, 204-229, and 243-268; these read IGLQ…RHLY, ISLQ…RDIY, and ISLQ…RQVY. Residues 279–329 form a disordered region; sequence PVIHNGSQGTGTNGSEISDSDYQAEYPDEYHGEYQDDYPRDYQYSDQGIDY. The span at 306–318 shows a compositional bias: basic and acidic residues; the sequence is DEYHGEYQDDYPR. The residue at position 323 (Ser-323) is a Phosphoserine.

Belongs to the calponin family. In terms of tissue distribution, expressed in both non-smooth muscle tissues as well as smooth muscle tissues.

Functionally, thin filament-associated protein that is implicated in the regulation and modulation of smooth muscle contraction. It is capable of binding to actin, calmodulin and tropomyosin. The interaction of calponin with actin inhibits the actomyosin Mg-ATPase activity. This chain is Calponin-3 (CNN3), found in Homo sapiens (Human).